The chain runs to 409 residues: All trans-polyprenyl-diphosphate synthase PDSS1 (409 aa).

Isopentenyl diphosphate is bound by residues lysine 128, arginine 131, and histidine 167. Residues aspartate 174 and aspartate 178 each contribute to the Mg(2+) site. Position 184 (arginine 184) interacts with isopentenyl diphosphate.

This sequence belongs to the FPP/GGPP synthase family. As to quaternary structure, heterotetramer composed of 2 PDSS1/DPS1 and 2 PDSS2/DLP1 subunits. It depends on Mg(2+) as a cofactor.

The protein resides in the mitochondrion. The enzyme catalyses 7 isopentenyl diphosphate + (2E,6E)-farnesyl diphosphate = all-trans-decaprenyl diphosphate + 7 diphosphate. The catalysed reaction is 6 isopentenyl diphosphate + (2E,6E)-farnesyl diphosphate = all-trans-nonaprenyl diphosphate + 6 diphosphate. The protein operates within cofactor biosynthesis; ubiquinone biosynthesis. Heterotetrameric enzyme that catalyzes the condensation of farnesyl diphosphate (FPP), which acts as a primer, and isopentenyl diphosphate (IPP) to produce prenyl diphosphates of varying chain lengths and participates in the determination of the side chain of ubiquinone. Supplies nona and decaprenyl diphosphate, the precursors for the side chain of the isoprenoid quinones ubiquinone-9 (Q9)and ubiquinone-10 (Q10) respectively. The enzyme adds isopentenyl diphosphate molecules sequentially to farnesyl diphosphate with trans stereochemistry. This Mus musculus (Mouse) protein is All trans-polyprenyl-diphosphate synthase PDSS1.